Here is a 306-residue protein sequence, read N- to C-terminus: Glutathione transport system permease protein GsiC (306 aa).

The Cytoplasmic segment spans residues 1–8; the sequence is MLNYVIKR. A helical transmembrane segment spans residues 9–29; that stretch reads LLGLIPTLFIVSVLVFLFVHM. Over 30–102 the chain is Periplasmic; it reads LPGDPARLIA…SRFMPTLWLT (73 aa). One can recognise an ABC transmembrane type-1 domain in the interval 95–292; sequence FMPTLWLTIT…LEFILINLVV (198 aa). A helical membrane pass occupies residues 103-123; it reads ITSMVWAVIFGMAAGIIAAVW. Residues 124–134 are Cytoplasmic-facing; sequence RNRWPDRLSMT. The helical transmembrane segment at 135–155 threads the bilayer; it reads IAVSGISFPAFALGMLLIQVF. The Periplasmic segment spans residues 156–168; it reads SVELGWLPTVGAD. A helical transmembrane segment spans residues 169–189; it reads SWQHYILPSLTLGAAVAAVMA. The Cytoplasmic segment spans residues 190–228; it reads RFTRASFVDVLSEDYMRTARAKGVSETWVVLKHGLRNAM. A helical transmembrane segment spans residues 229–249; that stretch reads IPVVTMMGLQFGFLLGGSIVV. The Periplasmic portion of the chain corresponds to 250–277; that stretch reads EKVFNWPGLGRLLVDSVEMRDYPVIQAE. The chain crosses the membrane as a helical span at residues 278 to 298; that stretch reads ILLFSLEFILINLVVDVLYAA. Residues 299-306 are Cytoplasmic-facing; sequence INPAIRYK.

Belongs to the binding-protein-dependent transport system permease family. The complex is composed of two ATP-binding proteins (GsiA), two transmembrane proteins (GsiC and GsiD) and a solute-binding protein (GsiB).

It is found in the cell inner membrane. Part of the ABC transporter complex GsiABCD involved in glutathione import. Probably responsible for the translocation of the substrate across the membrane. This chain is Glutathione transport system permease protein GsiC, found in Escherichia coli O1:K1 / APEC.